The chain runs to 372 residues: NAD(P)H-quinone oxidoreductase subunit 1 (372 aa).

The next 8 helical transmembrane spans lie at 27 to 47, 97 to 117, 128 to 148, 176 to 196, 204 to 224, 266 to 286, 308 to 328, and 347 to 367; these read IIWLPLPMLLVLVAAVVGVLV, ILFTAGPILVLVPVILSWLIV, VGIGIFLWIALSSIQPIGLLM, LALSVLAIVLMTNSLSTIDIV, ILSWNIWRQPVGFIVFWICAL, ILSALLVSILYLGGWGFPIPV, SIGIVMTVLKAYLLVFIAILL, and FLLPISLANLLITAGLKLAFP.

This sequence belongs to the complex I subunit 1 family. In terms of assembly, NDH-1 is composed of at least 11 different subunits.

The protein resides in the cellular thylakoid membrane. It carries out the reaction a plastoquinone + NADH + (n+1) H(+)(in) = a plastoquinol + NAD(+) + n H(+)(out). The enzyme catalyses a plastoquinone + NADPH + (n+1) H(+)(in) = a plastoquinol + NADP(+) + n H(+)(out). Functionally, NDH-1 shuttles electrons from an unknown electron donor, via FMN and iron-sulfur (Fe-S) centers, to quinones in the respiratory and/or the photosynthetic chain. The immediate electron acceptor for the enzyme in this species is believed to be plastoquinone. Couples the redox reaction to proton translocation, and thus conserves the redox energy in a proton gradient. The chain is NAD(P)H-quinone oxidoreductase subunit 1 from Prochlorococcus marinus (strain MIT 9215).